Consider the following 315-residue polypeptide: Methionyl-tRNA formyltransferase (315 aa).

113 to 116 provides a ligand contact to (6S)-5,6,7,8-tetrahydrofolate; that stretch reads SLLP.

This sequence belongs to the Fmt family.

The catalysed reaction is L-methionyl-tRNA(fMet) + (6R)-10-formyltetrahydrofolate = N-formyl-L-methionyl-tRNA(fMet) + (6S)-5,6,7,8-tetrahydrofolate + H(+). Attaches a formyl group to the free amino group of methionyl-tRNA(fMet). The formyl group appears to play a dual role in the initiator identity of N-formylmethionyl-tRNA by promoting its recognition by IF2 and preventing the misappropriation of this tRNA by the elongation apparatus. The sequence is that of Methionyl-tRNA formyltransferase from Cronobacter sakazakii (strain ATCC BAA-894) (Enterobacter sakazakii).